The following is a 337-amino-acid chain: MASSSGSKAEFIVGGKYKLVRKIGSGSFGDIYLAINITNGEEVAVKLESQKARHPQLLYESKLYKILQGGVGIPHIRWYGQEKDYNVLVMDLLGPSLEDLFNFCSRRFTMKTVLMLADQMISRIEYVHTKNFIHRDIKPDNFLMGIGRHCNKLFLIDFGLAKKYRDNRTRQHIPYREDKNLTGTARYASINAHLGIEQSRRDDMESLGYVLMYFNRTSLPWQGLKAATKKQKYEKISEKKMSTPVEVLCKGFPAEFAMYLNYCRGLRFEEAPDYMYLRQLFRILFRTLNHQYDYTFDWTMLKQKAAQQAASSSGQGQQAQTPTGKQTDKSKSNMKGF.

The 269-residue stretch at 17–285 folds into the Protein kinase domain; that stretch reads YKLVRKIGSG…YLRQLFRILF (269 aa). Residues 23-31 and K46 contribute to the ATP site; that span reads IGSGSFGDI. Residue D136 is the Proton acceptor of the active site. Over residues 309–325 the composition is skewed to low complexity; that stretch reads AASSSGQGQQAQTPTGK. A disordered region spans residues 309–337; it reads AASSSGQGQQAQTPTGKQTDKSKSNMKGF.

The protein belongs to the protein kinase superfamily. CK1 Ser/Thr protein kinase family. Casein kinase I subfamily. Autophosphorylated.

The protein localises to the cytoplasm. It localises to the cytoskeleton. The protein resides in the microtubule organizing center. Its subcellular location is the centrosome. It is found in the chromosome. The protein localises to the centromere. It localises to the kinetochore. The protein resides in the nucleus speckle. Its subcellular location is the cilium basal body. It is found in the spindle. The catalysed reaction is L-seryl-[protein] + ATP = O-phospho-L-seryl-[protein] + ADP + H(+). It carries out the reaction L-threonyl-[protein] + ATP = O-phospho-L-threonyl-[protein] + ADP + H(+). Its function is as follows. Casein kinases are operationally defined by their preferential utilization of acidic proteins such as caseins as substrates. It can phosphorylate a large number of proteins. Participates in Wnt signaling. May play a role in segregating chromosomes during mitosis. May play a role in keratin cytoskeleton disassembly. The polypeptide is Casein kinase I isoform alpha (CSNK1A1) (Gallus gallus (Chicken)).